A 640-amino-acid polypeptide reads, in one-letter code: uncharacterized protein (640 aa).

The region spanning 184-328 (VKRDTIFIIK…KVQRSIDTMI (145 aa)) is the TIR domain. Residues 613-640 (LPNDLDDEDEELDDSTLGRPDSDEEGGE) form a disordered region. Over residues 616 to 626 (DLDDEDEELDD) the composition is skewed to acidic residues.

This is an uncharacterized protein from Sinorhizobium fredii (strain NBRC 101917 / NGR234).